The chain runs to 367 residues: Phthiodiolone/phenolphthiodiolone dimycocerosates ketoreductase (367 aa).

It belongs to the mer family. Phthiodiolone/phenolphthiodiolone dimycocerosates ketoreductase subfamily.

In terms of biological role, catalyzes the reduction of the keto moiety of phthiodiolone dimycocerosates (DIM B) and glycosylated phenolphthiodiolone dimycocerosates to form the intermediate compounds phthiotriol and glycosylated phenolphthiotriol dimycocerosates during phthiocerol dimycocerosates (DIM A) and glycosylated phenolphthiocerol dimycocerosates (PGL) biosynthesis. The sequence is that of Phthiodiolone/phenolphthiodiolone dimycocerosates ketoreductase from Mycobacterium kansasii.